The primary structure comprises 235 residues: Protein shisa-5 (235 aa).

The signal sequence occupies residues 1 to 26 (MAAPAPSLWTLLLLLLLLPPPPGAHG). The Extracellular segment spans residues 27-105 (ELCRPFGEDN…SSFDSDPMSG (79 aa)). A helical transmembrane segment spans residues 106-126 (FGATVAIGVTIFVVFIATIII). Residues 127-235 (CFTCSCCCLY…TYMDSLKTIP (109 aa)) lie on the Cytoplasmic side of the membrane. The disordered stretch occupies residues 157–235 (APYPQPQPQP…TYMDSLKTIP (79 aa)). Pro residues-rich tracts occupy residues 159–172 (YPQP…PSYP) and 181–211 (PMPP…PPPY).

The protein belongs to the shisa family. Interacts with PDCD6; PDCD6 can stabilize SHISA5. As to expression, spleen and thymus.

It is found in the endoplasmic reticulum membrane. Its subcellular location is the nucleus membrane. Functionally, can induce apoptosis in a caspase-dependent manner and plays a role in p53/TP53-dependent apoptosis. The protein is Protein shisa-5 (Shisa5) of Mus musculus (Mouse).